A 490-amino-acid chain; its full sequence is Angiopoietin-related protein 1 (490 aa).

The first 22 residues, 1–22 (MKAFVWTLSVLLFLLGSGHCKG), serve as a signal peptide directing secretion. Residues 79–167 (ITRMDLENLK…LNVTTEMLKM (89 aa)) are a coiled coil. 2 N-linked (GlcNAc...) asparagine glycosylation sites follow: N159 and N187. The 221-residue stretch at 270–490 (FINEGPFKDC…AVQMMIKPID (221 aa)) folds into the Fibrinogen C-terminal domain. 2 disulfide bridges follow: C279–C308 and C431–C444.

The protein localises to the secreted. This chain is Angiopoietin-related protein 1 (Angptl1), found in Mus musculus (Mouse).